Here is a 347-residue protein sequence, read N- to C-terminus: Tryptophan--tRNA ligase (347 aa).

Residues 10–12 (QAS) and 18–19 (GN) each bind ATP. The 'HIGH' region signature appears at 11 to 19 (ASGRQHLGN). Asp-140 contributes to the L-tryptophan binding site. Residues 152 to 154 (GND), Ile-191, and 200 to 204 (KMSKS) each bind ATP. Residues 200–204 (KMSKS) carry the 'KMSKS' region motif.

It belongs to the class-I aminoacyl-tRNA synthetase family. In terms of assembly, homodimer.

The protein localises to the cytoplasm. The enzyme catalyses tRNA(Trp) + L-tryptophan + ATP = L-tryptophyl-tRNA(Trp) + AMP + diphosphate + H(+). Functionally, catalyzes the attachment of tryptophan to tRNA(Trp). The polypeptide is Tryptophan--tRNA ligase (Mycoplasma genitalium (strain ATCC 33530 / DSM 19775 / NCTC 10195 / G37) (Mycoplasmoides genitalium)).